The following is a 225-amino-acid chain: Probable methylthioribulose-1-phosphate dehydratase (225 aa).

Cysteine 86 is a substrate binding site. Zn(2+)-binding residues include histidine 104 and histidine 106. The active-site Proton donor/acceptor is glutamate 127. Residue histidine 183 coordinates Zn(2+).

This sequence belongs to the aldolase class II family. MtnB subfamily. Requires Zn(2+) as cofactor.

The protein localises to the cytoplasm. The catalysed reaction is 5-(methylsulfanyl)-D-ribulose 1-phosphate = 5-methylsulfanyl-2,3-dioxopentyl phosphate + H2O. Its pathway is amino-acid biosynthesis; L-methionine biosynthesis via salvage pathway; L-methionine from S-methyl-5-thio-alpha-D-ribose 1-phosphate: step 2/6. In terms of biological role, catalyzes the dehydration of methylthioribulose-1-phosphate (MTRu-1-P) into 2,3-diketo-5-methylthiopentyl-1-phosphate (DK-MTP-1-P). The sequence is that of Probable methylthioribulose-1-phosphate dehydratase from Leishmania braziliensis.